The chain runs to 181 residues: Ribosome maturation factor RimP (181 aa).

The protein belongs to the RimP family.

It localises to the cytoplasm. In terms of biological role, required for maturation of 30S ribosomal subunits. This Mycolicibacterium smegmatis (strain ATCC 700084 / mc(2)155) (Mycobacterium smegmatis) protein is Ribosome maturation factor RimP.